The chain runs to 1681 residues: Probable clathrin heavy chain 1 (1681 aa).

7 WD40-like repeat regions span residues 22–65 (NITF…RPIS), 66–105 (ADSV…NVED), 106–147 (VVYW…QSLA), 148–193 (GTQI…QPIE), 194–255 (GHAA…ADTA), 256–299 (GDFP…ISTD), and 300–328 (TVFV…VSID). CHCR repeat units lie at residues 539-685 (SENG…QVVV), 688-830 (ASKY…SEDA), 835-974 (IINT…QLID), 981-1126 (LSET…VKEA), 1130-1271 (FIKA…FRLA), 1276-1422 (LHIV…LLLN), and 1425-1568 (LTVL…YDCF). A compositionally biased stretch (basic and acidic residues) spans 1616–1628 (ERSEHERKEEKAE). The disordered stretch occupies residues 1616 to 1635 (ERSEHERKEEKAEQQQNNGM).

It belongs to the clathrin heavy chain family. As to quaternary structure, clathrin triskelions, composed of 3 heavy chains and 3 light chains, are the basic subunits of the clathrin coat. May interact with beta arrestin arr-1.

It localises to the cytoplasmic vesicle membrane. The protein resides in the membrane. Its subcellular location is the coated pit. Functionally, clathrin is the major protein of the polyhedral coat of coated pits and vesicles. May play a role in yolk protein clatherin-mediated endocytosis by oocytes during oogenesis. The polypeptide is Probable clathrin heavy chain 1 (chc-1) (Caenorhabditis elegans).